A 243-amino-acid polypeptide reads, in one-letter code: Phosphoribosylaminoimidazole-succinocarboxamide synthase (243 aa).

This sequence belongs to the SAICAR synthetase family.

It catalyses the reaction 5-amino-1-(5-phospho-D-ribosyl)imidazole-4-carboxylate + L-aspartate + ATP = (2S)-2-[5-amino-1-(5-phospho-beta-D-ribosyl)imidazole-4-carboxamido]succinate + ADP + phosphate + 2 H(+). It functions in the pathway purine metabolism; IMP biosynthesis via de novo pathway; 5-amino-1-(5-phospho-D-ribosyl)imidazole-4-carboxamide from 5-amino-1-(5-phospho-D-ribosyl)imidazole-4-carboxylate: step 1/2. This Methanobrevibacter smithii (strain ATCC 35061 / DSM 861 / OCM 144 / PS) protein is Phosphoribosylaminoimidazole-succinocarboxamide synthase.